The chain runs to 271 residues: MRFTEQLAAAWQRNNSLLCVGLDPDPARLPASLTGTGGAIFSFCRAIVDATADLVCAFKPQIAYFASQRAEDQLEQLISYIHEAYPGVPVILDAKRGDIGSTAEHYAKEAFERYQADAVTVSPYMGFDSMQPYLAHADKGVIVLCRTSNAGGSDVQFLETDGRPVYQVVAERARDVWNTSGQMGLVVGATFPEEIAKVREIVGDMPLLIPGVGAQGGDIEATVRAGRTADGTGMMINSSRAILYASTDSDFADAARRVALATRDQINQFRN.

The active-site Proton donor is the lysine 95.

The protein belongs to the OMP decarboxylase family. Type 2 subfamily.

The enzyme catalyses orotidine 5'-phosphate + H(+) = UMP + CO2. The protein operates within pyrimidine metabolism; UMP biosynthesis via de novo pathway; UMP from orotate: step 2/2. This chain is Orotidine 5'-phosphate decarboxylase, found in Ralstonia pickettii (strain 12J).